We begin with the raw amino-acid sequence, 60 residues long: Large ribosomal subunit protein bL32 (60 aa).

Positions 1-16 (MAVPRRKTSPSRRGMR) are enriched in basic residues. A disordered region spans residues 1-60 (MAVPRRKTSPSRRGMRRSADAIKKPTYAEDKDSGELRRPHHLDLKTGMYKGRQVLIKKES). Positions 17-44 (RSADAIKKPTYAEDKDSGELRRPHHLDL) are enriched in basic and acidic residues.

The protein belongs to the bacterial ribosomal protein bL32 family.

The sequence is that of Large ribosomal subunit protein bL32 from Rhodopseudomonas palustris (strain BisA53).